A 149-amino-acid chain; its full sequence is 3-dehydroquinate dehydratase (149 aa).

The active-site Proton acceptor is the tyrosine 22. Substrate is bound by residues asparagine 73, histidine 79, and aspartate 86. Catalysis depends on histidine 99, which acts as the Proton donor. Residues 100–101 (LS) and arginine 110 contribute to the substrate site.

This sequence belongs to the type-II 3-dehydroquinase family. As to quaternary structure, homododecamer.

It carries out the reaction 3-dehydroquinate = 3-dehydroshikimate + H2O. It participates in metabolic intermediate biosynthesis; chorismate biosynthesis; chorismate from D-erythrose 4-phosphate and phosphoenolpyruvate: step 3/7. Its function is as follows. Catalyzes a trans-dehydration via an enolate intermediate. The polypeptide is 3-dehydroquinate dehydratase (Prochlorococcus marinus (strain MIT 9313)).